Consider the following 184-residue polypeptide: Ribosome maturation factor RimM (184 aa).

A PRC barrel domain is found at 106–184 (PGDYYWYQLE…RMIVDWDPEF (79 aa)).

The protein belongs to the RimM family. In terms of assembly, binds ribosomal protein uS19.

Its subcellular location is the cytoplasm. An accessory protein needed during the final step in the assembly of 30S ribosomal subunit, possibly for assembly of the head region. Essential for efficient processing of 16S rRNA. May be needed both before and after RbfA during the maturation of 16S rRNA. It has affinity for free ribosomal 30S subunits but not for 70S ribosomes. The sequence is that of Ribosome maturation factor RimM from Chromohalobacter salexigens (strain ATCC BAA-138 / DSM 3043 / CIP 106854 / NCIMB 13768 / 1H11).